The primary structure comprises 72 residues: Cell division protein ZapB (72 aa).

Positions 5–71 (ILDQLEEKIK…LRSLLGQIDN (67 aa)) form a coiled coil.

It belongs to the ZapB family. Homodimer. The ends of the coiled-coil dimer bind to each other, forming polymers. Interacts with FtsZ.

It localises to the cytoplasm. Non-essential, abundant cell division factor that is required for proper Z-ring formation. It is recruited early to the divisome by direct interaction with FtsZ, stimulating Z-ring assembly and thereby promoting cell division earlier in the cell cycle. Its recruitment to the Z-ring requires functional FtsA or ZipA. The sequence is that of Cell division protein ZapB from Actinobacillus pleuropneumoniae serotype 5b (strain L20).